The sequence spans 488 residues: C2H2-type transcription factor MSN2 (488 aa).

2 consecutive C2H2-type zinc fingers follow at residues 376–399 (FVCD…RSLH) and 405–427 (FECN…ARTH).

The protein resides in the nucleus. Its subcellular location is the cytoplasm. Transcription factor that acts as a key downstream transcription factor in the HOG1-MAPK pathway. Plays crucial roles in the regulation of conidiation, virulence and multi-stress responses. Acts as a negative regulator of proteases, lipases, as well as of the red-pigmented oosporein production, and contributes to virulence and growth in response to external pH. Contributes to the ability to infect Rhipicephalus microplus (Acari, Ixodidae) via the cuticle-penetration requiring route involving proteolytic activity at the host cuticle. Does not seem to be involved in subsequent growth and proliferation once the tick cuticle has been breached. In Beauveria bassiana (strain ARSEF 2860) (White muscardine disease fungus), this protein is C2H2-type transcription factor MSN2.